We begin with the raw amino-acid sequence, 720 residues long: Collectin-12 (720 aa).

Topologically, residues 1-37 are cytoplasmic; it reads MKDDFNDEEEVQSFGYKRFGIQEGNECTKCKNDWALR. A helical; Signal-anchor for type II membrane protein transmembrane segment spans residues 38–58; the sequence is VAIALLYVLCALLTIAVAVLG. At 59–720 the chain is on the extracellular side; it reads YKVVQRMDNV…RTNESKVPVL (662 aa). Coiled-coil stretches lie at residues 95–120, 216–267, and 377–408; these read EKSE…QLSD, ISSL…LAAN, and LHGL…LDKE. The interval 433-576 is disordered; the sequence is FTILQGPPGP…GPPGLPGLPA (144 aa). Collagen-like domains follow at residues 444–503 and 510–569; these read GPRG…PGPK and GRQG…PGPP. A compositionally biased stretch (basic and acidic residues) spans 460-479; it reads PKGEKGEKGAPGDAGPKGEK. Positions 488-503 are enriched in low complexity; sequence PGLKGPPGSRGSPGPK. Over residues 504-513 the composition is skewed to gly residues; it reads GSRGSGGRQG. A compositionally biased stretch (low complexity) spans 527–560; it reads PGRDGQPGPTGPQGPQGLRGPAGPAGLEGARGPV. The segment covering 562–576 has biased composition (pro residues); sequence PIGPPGPPGLPGLPA. 3 disulfides stabilise this stretch: C604–C615, C634–C709, and C687–C701. Residues 611–710 form the C-type lectin domain; that stretch reads FREQCYHFSA…CTERIGFICE (100 aa). Ca(2+) is bound by residues I643, N645, and E649. K670, Q673, and D675 together coordinate a carbohydrate. Ca(2+) contacts are provided by Q673, D675, N676, E685, D686, N697, D698, and E710. A carbohydrate is bound at residue E685. A carbohydrate-binding residues include N697 and D698.

It localises to the membrane. In terms of biological role, scavenger receptor that displays several functions associated with host defense. Binds to carbohydrates. The chain is Collectin-12 (colec12) from Danio rerio (Zebrafish).